The primary structure comprises 188 residues: Probable RNA 2'-phosphotransferase (188 aa).

Belongs to the KptA/TPT1 family.

Its function is as follows. Removes the 2'-phosphate from RNA via an intermediate in which the phosphate is ADP-ribosylated by NAD followed by a presumed transesterification to release the RNA and generate ADP-ribose 1''-2''-cyclic phosphate (APPR&gt;P). May function as an ADP-ribosylase. The chain is Probable RNA 2'-phosphotransferase from Lacticaseibacillus paracasei (strain ATCC 334 / BCRC 17002 / CCUG 31169 / CIP 107868 / KCTC 3260 / NRRL B-441) (Lactobacillus paracasei).